Consider the following 251-residue polypeptide: UPF0246 protein DSY0297 (251 aa).

This sequence belongs to the UPF0246 family.

In Desulfitobacterium hafniense (strain Y51), this protein is UPF0246 protein DSY0297.